We begin with the raw amino-acid sequence, 74 residues long: Cytochrome b559 subunit alpha (74 aa).

A helical membrane pass occupies residues Val22 to Trp36. A heme-binding site is contributed by His24.

This sequence belongs to the PsbE/PsbF family. Heterodimer of an alpha subunit and a beta subunit. PSII is composed of 1 copy each of membrane proteins PsbA, PsbB, PsbC, PsbD, PsbE, PsbF, PsbH, PsbI, PsbJ, PsbK, PsbL, PsbM, PsbT, PsbX, PsbY, PsbZ, Psb30/Ycf12, at least 3 peripheral proteins of the oxygen-evolving complex and a large number of cofactors. It forms dimeric complexes. The cofactor is heme b.

Its subcellular location is the plastid. It is found in the cyanelle thylakoid membrane. In terms of biological role, this b-type cytochrome is tightly associated with the reaction center of photosystem II (PSII). PSII is a light-driven water:plastoquinone oxidoreductase that uses light energy to abstract electrons from H(2)O, generating O(2) and a proton gradient subsequently used for ATP formation. It consists of a core antenna complex that captures photons, and an electron transfer chain that converts photonic excitation into a charge separation. This chain is Cytochrome b559 subunit alpha, found in Cyanophora paradoxa.